The sequence spans 205 residues: Holliday junction resolvase RecU (205 aa).

A disordered region spans residues 1–26 (MIRYPNGKSYQPIQPIGTKKRISGES). Threonine 86, aspartate 88, glutamate 101, and glutamine 120 together coordinate Mg(2+).

The protein belongs to the RecU family. Mg(2+) is required as a cofactor.

It localises to the cytoplasm. It carries out the reaction Endonucleolytic cleavage at a junction such as a reciprocal single-stranded crossover between two homologous DNA duplexes (Holliday junction).. Endonuclease that resolves Holliday junction intermediates in genetic recombination. Cleaves mobile four-strand junctions by introducing symmetrical nicks in paired strands. Promotes annealing of linear ssDNA with homologous dsDNA. Required for DNA repair, homologous recombination and chromosome segregation. The protein is Holliday junction resolvase RecU of Bacillus pumilus (strain SAFR-032).